Consider the following 279-residue polypeptide: Secreted RxLR effector protein 90 (279 aa).

Residues 1–19 form the signal peptide; sequence MKSAAAFATFLTLSVFVAT. The short motif at 29–46 is the RxLR-dEER element; sequence RGLRSLADNQSTESSEGR. Disordered regions lie at residues 29–53 and 135–176; these read RGLR…YNHH and ATPA…NLAG. N-linked (GlcNAc...) asparagine glycosylation is present at Asn37. Positions 135 to 146 are enriched in low complexity; that stretch reads ATPAPTTSVPSS. The span at 147–163 shows a compositional bias: polar residues; sequence LVNTDTSDNQLPTTPVA. Over residues 166–176 the composition is skewed to gly residues; the sequence is QGGGIGSNLAG. Residue Asn217 is glycosylated (N-linked (GlcNAc...) asparagine).

It belongs to the RxLR effector family.

It is found in the secreted. Its subcellular location is the host cell membrane. Secreted effector that completely suppresses the host cell death induced by cell death-inducing proteins. This is Secreted RxLR effector protein 90 from Plasmopara viticola (Downy mildew of grapevine).